The chain runs to 593 residues: Mitosis inducer protein kinase cdr1 (593 aa).

The region spanning 12-258 (WRLGKTLGTG…IPEVFSHPFL (247 aa)) is the Protein kinase domain. Residues 18 to 26 (LGTGSTSCV) and Lys41 contribute to the ATP site. Asp128 (proton acceptor) is an active-site residue. Residue Ser550 is modified to Phosphoserine.

The protein belongs to the protein kinase superfamily. CAMK Ser/Thr protein kinase family. NIM1 subfamily. Interacts with msp1.

The enzyme catalyses L-seryl-[protein] + ATP = O-phospho-L-seryl-[protein] + ADP + H(+). It catalyses the reaction L-threonyl-[protein] + ATP = O-phospho-L-threonyl-[protein] + ADP + H(+). This protein, a dose-dependent mitotic inducer, appears to function as a negative regulator of mitosis inhibitor wee1 by phosphorylating and inactivating it. The protein is Mitosis inducer protein kinase cdr1 (cdr1) of Schizosaccharomyces pombe (strain 972 / ATCC 24843) (Fission yeast).